The chain runs to 187 residues: Ubiquinol-cytochrome c reductase iron-sulfur subunit (187 aa).

The chain crosses the membrane as a helical span at residues 15 to 35; that stretch reads LYYATAGAGAVATGAAVWPLI. The Rieske domain occupies 89–185; that stretch reads QLGQLVDTNA…AKFIDETTIQ (97 aa). [2Fe-2S] cluster is bound by residues cysteine 129, histidine 131, cysteine 149, and histidine 152. Cysteine 134 and cysteine 151 are joined by a disulfide.

Belongs to the Rieske iron-sulfur protein family. In terms of assembly, the main subunits of complex b-c1 are: cytochrome b, cytochrome c1 and the Rieske protein. The cofactor is [2Fe-2S] cluster.

It is found in the cell membrane. The enzyme catalyses a quinol + 2 Fe(III)-[cytochrome c](out) = a quinone + 2 Fe(II)-[cytochrome c](out) + 2 H(+)(out). Component of the ubiquinol-cytochrome c reductase complex (complex III or cytochrome b-c1 complex), which is a respiratory chain that generates an electrochemical potential coupled to ATP synthesis. This chain is Ubiquinol-cytochrome c reductase iron-sulfur subunit (petA), found in Cereibacter sphaeroides (Rhodobacter sphaeroides).